We begin with the raw amino-acid sequence, 151 residues long: MKCPFCSSDNTRVIDSRPADDNSSIRRRRLCDDCGKRFTTYEKVETIPLIVIKKDNNREQYDRSKIEKGVLLACHKRPISADTISKLVDEVEIEIFAREEKEISTSLIGELIMDRLKDLDAVAYVRFASVYREFKDVNTFMTELKKMLDTK.

Residues 3–34 (CPFCSSDNTRVIDSRPADDNSSIRRRRLCDDC) fold into a zinc finger. Positions 49–139 (LIVIKKDNNR…VYREFKDVNT (91 aa)) constitute an ATP-cone domain.

Belongs to the NrdR family. It depends on Zn(2+) as a cofactor.

Its function is as follows. Negatively regulates transcription of bacterial ribonucleotide reductase nrd genes and operons by binding to NrdR-boxes. The chain is Transcriptional repressor NrdR from Agathobacter rectalis (strain ATCC 33656 / DSM 3377 / JCM 17463 / KCTC 5835 / VPI 0990) (Eubacterium rectale).